The following is a 616-amino-acid chain: Mitochondrial Rho GTPase 2 (616 aa).

The Cytoplasmic portion of the chain corresponds to 1–590; it reads MKRDVRILLL…HDTELSTASF (590 aa). Residues 2–168 enclose the Miro 1 domain; sequence KRDVRILLLG…FYYAQKAVLH (167 aa). GTP is bound by residues Gly16, Lys17, Thr18, and Ser19. Thr18 contributes to the Mg(2+) binding site. Asp57 contacts Mg(2+). Residues Ser59, Asn118, Lys119, Asp121, Ala149, and Lys150 each contribute to the GTP site. 2 consecutive EF-hand domains span residues 184-219 and 304-339; these read QCKK…CFGN and FGYQ…FPYT. Ca(2+) is bound by residues Asp199, Asn201, Glu208, Asp317, Asp319, Asp321, and Glu328. In terms of domain architecture, Miro 2 spans 416-577; it reads RNVFLCRVIG…YSKLATAAAF (162 aa). GTP is bound by residues Gly428, Gly430, Lys431, Ser432, and Ala433. Ser432 serves as a coordination point for Mg(2+). Glu474 is a Mg(2+) binding site. GTP is bound by residues Lys528, Asp530, and Cys559. The helical; Anchor for type IV membrane protein transmembrane segment at 591-613 threads the bilayer; sequence WLRVALGATVAAVVGFTLYKALL. Topologically, residues 614 to 616 are mitochondrial intermembrane; the sequence is RSK.

It belongs to the mitochondrial Rho GTPase family. Homodimer.

It localises to the mitochondrion outer membrane. The enzyme catalyses GTP + H2O = GDP + phosphate + H(+). It catalyses the reaction ATP + H2O = ADP + phosphate + H(+). The catalysed reaction is UTP + H2O = UDP + phosphate + H(+). Functionally, atypical mitochondrial nucleoside-triphosphatase (NTPase) involved in mitochondrial trafficking. Probably involved in control of anterograde transport of mitochondria and their subcellular distribution. Can hydrolyze GTP, ATP and UTP. This is Mitochondrial Rho GTPase 2 (rhot2) from Xenopus tropicalis (Western clawed frog).